The primary structure comprises 136 residues: Histone H3.2 (136 aa).

Residues 1 to 43 (MARTKQTARKSTGGKAPRKQLATKAARKSAPATGGVKKPHRFR) form a disordered region. Position 5 is an N6-methylated lysine (K5). The residue at position 10 (K10) is an N6-acetyllysine; alternate. An N6-methylated lysine; alternate modification is found at K10. Position 11 is a phosphoserine (S11). A Phosphothreonine modification is found at T12. Residue K15 is modified to N6-acetyllysine. N6-acetyllysine; alternate occurs at positions 19 and 24. Residues K19 and K24 each carry the N6-methylated lysine; alternate modification. K28 is modified (N6-methylated lysine). Phosphoserine is present on S29. Position 37 is an N6-methylated lysine (K37).

It belongs to the histone H3 family. The nucleosome is a histone octamer containing two molecules each of H2A, H2B, H3 and H4 assembled in one H3-H4 heterotetramer and two H2A-H2B heterodimers. The octamer wraps approximately 147 bp of DNA. In terms of processing, acetylation is generally linked to gene activation. Can be acetylated to form H3K9ac, H3K14ac, H3K18ac and H3K23ac. H3K9ac could compete with H3K9me and prevent gene silencing. H3K9ac is restricted to euchromatin. Methylated to form mainly H3K4me, H3K9me, H3K18me, H3K23me, H3K27me and H3K36me. H3K4me1/2/3, H3K9me3, H3K27me3 and H3K36me1/2/3 are typical marks for euchromatin, whereas heterochromatic chromocenters are enriched in H3K9me1/2 and H3K27me1/2. H2BK143ub1 is probably prerequisite for H3K4me. Post-translationally, can be phosphorylated to form H3S10ph, H3T11ph and H3S28ph.

It is found in the nucleus. The protein localises to the chromosome. Functionally, core component of nucleosome. Nucleosomes wrap and compact DNA into chromatin, limiting DNA accessibility to the cellular machineries which require DNA as a template. Histones thereby play a central role in transcription regulation, DNA repair, DNA replication and chromosomal stability. DNA accessibility is regulated via a complex set of post-translational modifications of histones, also called histone code, and nucleosome remodeling. The sequence is that of Histone H3.2 from Encephalartos altensteinii (Altenstein's bread tree).